The primary structure comprises 202 residues: Protein lin-28 homolog A (202 aa).

The interval Met1–Pro31 is disordered. The CSD domain occupies His33–Pro106. Residues Gly107–Gly130 are flexible linker. 2 consecutive CCHC-type zinc fingers follow at residues Asp131 to Leu148 and Lys153 to Ala170. Zn(2+) is bound by residues Cys133, Cys136, His141, Cys146, Cys155, Cys158, His163, and Cys168. The disordered stretch occupies residues Pro169–Glu202.

It belongs to the lin-28 family. In terms of assembly, monomer.

Its subcellular location is the cytoplasm. The protein resides in the rough endoplasmic reticulum. It localises to the P-body. It is found in the stress granule. The protein localises to the nucleus. Its subcellular location is the nucleolus. Functionally, RNA-binding protein that inhibits processing of pre-let-7 miRNAs and regulates translation of mRNAs that control developmental timing, pluripotency and metabolism. Seems to recognize a common structural G-quartet (G4) feature in its miRNA and mRNA targets. 'Translational enhancer' that drives specific mRNAs to polysomes and increases the efficiency of protein synthesis. Its association with the translational machinery and target mRNAs results in an increased number of initiation events per molecule of mRNA and, indirectly, in mRNA stabilization. Suppressor of microRNA (miRNA) biogenesis, including that of let-7. Binds specific target miRNA precursors (pre-miRNAs), recognizing an 5'-GGAG-3' motif found in their terminal loop, and recruits uridylyltransferase. This results in the terminal uridylation of target pre-miRNAs. Uridylated pre-miRNAs fail to be processed by Dicer and undergo degradation. Localized to the periendoplasmic reticulum area, binds to a large number of spliced mRNAs and inhibits the translation of mRNAs destined for the ER, reducing the synthesis of transmembrane proteins, ER or Golgi lumen proteins, and secretory proteins. Binds to and enhances the translation of mRNAs for several metabolic enzymes, increasing glycolysis and oxidative phosphorylation. Which, with the let-7 repression may enhance tissue repair in adult tissue. This is Protein lin-28 homolog A (LIN28A) from Gallus gallus (Chicken).